A 467-amino-acid polypeptide reads, in one-letter code: Constitutive acid phosphatase (467 aa).

A signal peptide spans 1–17; it reads MFKSVVYSVLAAALVNA. Histidine 75 functions as the Nucleophile in the catalytic mechanism. N-linked (GlcNAc...) asparagine glycans are attached at residues asparagine 97, asparagine 103, asparagine 162, asparagine 192, asparagine 250, and asparagine 315. Residue aspartate 338 is the Proton donor of the active site. N-linked (GlcNAc...) asparagine glycans are attached at residues asparagine 356, asparagine 390, asparagine 439, asparagine 445, asparagine 456, and asparagine 461.

This sequence belongs to the histidine acid phosphatase family.

It catalyses the reaction a phosphate monoester + H2O = an alcohol + phosphate. This is Constitutive acid phosphatase (PHO3) from Saccharomyces cerevisiae (strain ATCC 204508 / S288c) (Baker's yeast).